A 63-amino-acid chain; its full sequence is Cytochrome c oxidase subunit 5C (63 aa).

A helical transmembrane segment spans residues 16-34 (VVKEIFIGLTLGLVAGGMW).

Belongs to the cytochrome c oxidase subunit 5C family.

It localises to the mitochondrion inner membrane. In terms of biological role, this protein is one of the nuclear-coded polypeptide chains of cytochrome c oxidase, the terminal oxidase in mitochondrial electron transport. In Hordeum vulgare (Barley), this protein is Cytochrome c oxidase subunit 5C (COX5C).